The following is a 149-amino-acid chain: Sec-independent protein translocase protein TatB (149 aa).

The helical transmembrane segment at 1–21 (MFDIGFTELIVIGIVALVVVG) threads the bilayer. A disordered region spans residues 92 to 149 (VDMLDKSVRNEPQNAQTPPQTADAEPAQPDVRQQTLPLEEPDQNRAAGEPSSTSTRPA). The span at 101–111 (NEPQNAQTPPQ) shows a compositional bias: polar residues.

The protein belongs to the TatB family. The Tat system comprises two distinct complexes: a TatABC complex, containing multiple copies of TatA, TatB and TatC subunits, and a separate TatA complex, containing only TatA subunits. Substrates initially bind to the TatABC complex, which probably triggers association of the separate TatA complex to form the active translocon.

It is found in the cell inner membrane. Functionally, part of the twin-arginine translocation (Tat) system that transports large folded proteins containing a characteristic twin-arginine motif in their signal peptide across membranes. Together with TatC, TatB is part of a receptor directly interacting with Tat signal peptides. TatB may form an oligomeric binding site that transiently accommodates folded Tat precursor proteins before their translocation. The polypeptide is Sec-independent protein translocase protein TatB (Thiobacillus denitrificans (strain ATCC 25259 / T1)).